A 447-amino-acid chain; its full sequence is Trichothecene C-3 esterase (447 aa).

The signal sequence occupies residues 1-22 (MALNRLVFSLSLWLGFIGAAQA). N-linked (GlcNAc...) asparagine glycosylation is found at Asn-59, Asn-66, Asn-136, and Asn-189. The active-site Charge relay system is the Ser-202. Residues Asn-238, Asn-284, and Asn-314 are each glycosylated (N-linked (GlcNAc...) asparagine). Catalysis depends on charge relay system residues Asp-352 and His-384. Asn-389 and Asn-423 each carry an N-linked (GlcNAc...) asparagine glycan.

It belongs to the AB hydrolase superfamily. Lipase family.

The protein operates within sesquiterpene biosynthesis; trichothecene biosynthesis. Functionally, trichothecene C-3 esterase; part of the core gene cluster that mediates the biosynthesis of trichothecenes, a very large family of chemically related bicyclic sesquiterpene compounds acting as mycotoxins, including T2-toxin. The biosynthesis of trichothecenes begins with the cyclization of farnesyl diphosphate to trichodiene and is catalyzed by the trichodiene synthase TRI5. Trichodiene undergoes a series of oxygenations catalyzed by the cytochrome P450 monooxygenase TRI4. TRI4 controls the addition of four oxygens at C-2, C-3, C-11, and the C-12, C-13-epoxide to form the intermediate isotrichotriol. Isotrichotriol then undergoes a non-enzymatic isomerization and cyclization to form isotrichodermol. During this process, the oxygen at the C-2 position becomes the pyran ring oxygen and the hydroxyl group at C-11 is lost. More complex type A trichothecenes are built by modifying isotrichodermol through a series of paired hydroxylation and acetylation or acylation steps. Isotrichodermol is converted to isotrichodermin by the acetyltransferase TRI101. TRI101 encodes a C-3 transacetylase that acts as a self-protection or resistance factor during biosynthesis and that the presence of a free C-3 hydroxyl group is a key component of Fusarium trichothecene phytotoxicity. A second hydroxyl group is added to C-15 by the trichothecene C-15 hydroxylase TRI11, producing 15-decalonectrin, which is then acetylated by TRI3, producing calonectrin. A third hydroxyl group is added at C-4 by the cytochrome P450 monooxygenase TRI13, converting calonectrin to 3,15-diacetoxyspirpenol, which is subsequently acetylated by the acetyltransferase TRI7. A fourth hydroxyl group is added to C-8 by the cytochrome P450 monooxygenase TRI1, followed by the addition of an isovaleryl moiety by TRI16. Finally, the acetyl group is removed from the C-3 position by the trichothecene C-3 esterase TRI8 to produce T-2 toxin. This Fusarium sporotrichioides protein is Trichothecene C-3 esterase.